Consider the following 369-residue polypeptide: Molybdenum import ATP-binding protein ModC (369 aa).

The ABC transporter domain maps to 7–243; sequence PGQAGIHARF…LDLPMAMTDD (237 aa). 41–48 serves as a coordination point for ATP; that stretch reads GQSGSGKT. The 66-residue stretch at 304–369 folds into the Mop domain; the sequence is EGSILNVLAV…AQIKAVSLLA (66 aa).

It belongs to the ABC transporter superfamily. Molybdate importer (TC 3.A.1.8) family. The complex is composed of two ATP-binding proteins (ModC), two transmembrane proteins (ModB) and a solute-binding protein (ModA).

It localises to the cell inner membrane. The enzyme catalyses molybdate(out) + ATP + H2O = molybdate(in) + ADP + phosphate + H(+). Part of the ABC transporter complex ModABC involved in molybdenum import. Responsible for energy coupling to the transport system. The sequence is that of Molybdenum import ATP-binding protein ModC from Bordetella bronchiseptica (strain ATCC BAA-588 / NCTC 13252 / RB50) (Alcaligenes bronchisepticus).